We begin with the raw amino-acid sequence, 108 residues long: Iron-sulfur cluster assembly protein CyaY (108 aa).

This sequence belongs to the frataxin family.

In terms of biological role, involved in iron-sulfur (Fe-S) cluster assembly. May act as a regulator of Fe-S biogenesis. This chain is Iron-sulfur cluster assembly protein CyaY, found in Burkholderia ambifaria (strain MC40-6).